A 138-amino-acid polypeptide reads, in one-letter code: Acidic phospholipase A2 2 (138 aa).

The signal sequence occupies residues 1-16 (MRTLWIVAVWLTGVEG). 7 cysteine pairs are disulfide-bonded: Cys42/Cys131, Cys44/Cys60, Cys59/Cys111, Cys65/Cys138, Cys66/Cys104, Cys73/Cys97, and Cys91/Cys102. The Ca(2+) site is built by Tyr43, Gly45, and Gly47. His63 is an active-site residue. Residue Asp64 coordinates Ca(2+). Residue Asp105 is part of the active site.

In terms of assembly, monomer. The cofactor is Ca(2+). In terms of tissue distribution, expressed by the venom gland.

Its subcellular location is the secreted. It catalyses the reaction a 1,2-diacyl-sn-glycero-3-phosphocholine + H2O = a 1-acyl-sn-glycero-3-phosphocholine + a fatty acid + H(+). Snake venom phospholipase that inhibits ADP- and collagen-induced human platelet aggregation. This inhibition is completely inhibited by abolition of catalytic activity in case of collagen as inducer and partially inhibited in case of ADP as inducer. PLA2 catalyzes the calcium-dependent hydrolysis of the 2-acyl groups in 3-sn-phosphoglycerides. The chain is Acidic phospholipase A2 2 from Macrovipera lebetinus (Levantine viper).